We begin with the raw amino-acid sequence, 352 residues long: C-X-C chemokine receptor type 4 (352 aa).

An important for chemokine binding and signaling region spans residues 1–21 (MEGISIYTSDNYTEEMGSGDY). The Extracellular segment spans residues 1–38 (MEGISIYTSDNYTEEMGSGDYDSIKEPCFREENAHFNR). Sulfotyrosine is present on Y7. An N-linked (GlcNAc...) asparagine glycan is attached at N11. Y12 carries the post-translational modification Sulfotyrosine. S18 carries O-linked (Xyl...) (chondroitin sulfate) serine glycosylation. Position 21 is a sulfotyrosine (Y21). Intrachain disulfides connect C28-C274 and C109-C186. The helical transmembrane segment at 39-63 (IFLPTIYSIIFLTGIVGNGLVILVM) threads the bilayer. Topologically, residues 64 to 77 (GYQKKLRSMTDKYR) are cytoplasmic. The helical transmembrane segment at 78 to 99 (LHLSVADLLFVITLPFWAVDAV) threads the bilayer. Residues 94-97 (WAVD) are chemokine binding. Residues 100–110 (ANWYFGNFLCK) are Extracellular-facing. A helical transmembrane segment spans residues 111-130 (AVHVIYTVNLYSSVLILAFI). The interval 113 to 117 (HVIYT) is chemokine binding. Residues 131–154 (SLDRYLAIVHATNSQKPRKLLAEK) lie on the Cytoplasmic side of the membrane. The Important for signaling motif lies at 133–135 (DRY). Residues 135-147 (YLAIVHATNSQKP) form an involved in dimerization; when bound to chemokine region. The helical transmembrane segment at 155–174 (VVYVGVWIPALLLTIPDFIF) threads the bilayer. Over 175 to 195 (ASVSEADDRYICDRFYPNDLW) the chain is Extracellular. The chemokine binding, important for signaling stretch occupies residues 186-190 (CDRFY). An involved in dimerization region spans residues 191–210 (PNDLWVVVFQFQHIMVGLIL). The chain crosses the membrane as a helical span at residues 196-216 (VVVFQFQHIMVGLILPGIDIL). The Cytoplasmic segment spans residues 217 to 241 (SCYCIIISKLSHSKGHQKRKALKTT). A helical transmembrane segment spans residues 242–261 (VILILAFFACWLPYYIGISI). Topologically, residues 262-282 (DSFILLEIIKQGCEFENTVHK) are extracellular. An involved in dimerization region spans residues 266-268 (LLE). The helical transmembrane segment at 283 to 302 (WISITEALAFFHCCLNPILY) threads the bilayer. The Cytoplasmic segment spans residues 303–352 (AFLGAKFKTSAQHALTSVSRGSSLKILSKGKRGGHSSVSTESESSSFHSS). S319 and S321 each carry phosphoserine. Phosphoserine; by PKC and GRK6 occurs at positions 324 and 325. The segment at 329 to 352 (LSKGKRGGHSSVSTESESSSFHSS) is disordered. Residue S330 is modified to Phosphoserine; by GRK6. A Glycyl lysine isopeptide (Lys-Gly) (interchain with G-Cter in ubiquitin) cross-link involves residue K331. Over residues 337–352 (HSSVSTESESSSFHSS) the composition is skewed to low complexity. The residue at position 339 (S339) is a Phosphoserine; by GRK6. A phosphoserine mark is found at S348 and S351.

This sequence belongs to the G-protein coupled receptor 1 family. As to quaternary structure, monomer. Can form homodimers. Interacts with CD164. Interacts with ARRB2; the interaction is dependent on the C-terminal phosphorylation of CXCR4 and allows activation of MAPK1 and MAPK3. Interacts with ARR3; the interaction is dependent on the C-terminal phosphorylation of CXCR4 and modulates calcium mobilization. Interacts with RNF113A; the interaction, enhanced by CXCL12, promotes CXCR4 ubiquitination and subsequent degradation. Interacts (via the cytoplasmic C-terminal) with ITCH (via the WW domains I and II); the interaction, enhanced by CXCL12, promotes CXCR4 ubiquitination and leads to its degradation. Interacts with extracellular ubiquitin. Interacts with DBN1; this interaction is enhanced by antigenic stimulation. Following LPS binding, may form a complex with GDF5, HSP90AA1 and HSPA8. Phosphorylated on agonist stimulation. Rapidly phosphorylated on serine and threonine residues in the C-terminal. Phosphorylation at Ser-324 and Ser-325 leads to recruitment of ITCH, ubiquitination and protein degradation. Post-translationally, ubiquitinated after ligand binding, leading to its degradation. Ubiquitinated by ITCH at the cell membrane on agonist stimulation. The ubiquitin-dependent mechanism, endosomal sorting complex required for transport (ESCRT), then targets CXCR4 for lysosomal degradation. This process is dependent also on prior Ser-/Thr-phosphorylation in the C-terminal of CXCR4. Also binding of ARRB1 to STAM negatively regulates CXCR4 sorting to lysosomes though modulating ubiquitination of SFR5S. In terms of processing, sulfation is required for efficient binding of CXCL12/SDF-1alpha and promotes its dimerization. O- and N-glycosylated. N-glycosylation can mask coreceptor function. The O-glycosylation chondroitin sulfate attachment does not affect interaction with CXCL12/SDF-1alpha nor its coreceptor activity.

The protein localises to the cell membrane. It is found in the cell junction. It localises to the early endosome. The protein resides in the late endosome. Its subcellular location is the lysosome. Receptor for the C-X-C chemokine CXCL12/SDF-1 that transduces a signal by increasing intracellular calcium ion levels and enhancing MAPK1/MAPK3 activation. Involved in the AKT signaling cascade. Plays a role in regulation of cell migration, e.g. during wound healing. Acts as a receptor for extracellular ubiquitin; leading to enhanced intracellular calcium ions and reduced cellular cAMP levels. Binds bacterial lipopolysaccharide (LPS) et mediates LPS-induced inflammatory response, including TNF secretion by monocytes. Involved in hematopoiesis and in cardiac ventricular septum formation. Also plays an essential role in vascularization of the gastrointestinal tract, probably by regulating vascular branching and/or remodeling processes in endothelial cells. Involved in cerebellar development. In the CNS, could mediate hippocampal-neuron survival. In Macaca mulatta (Rhesus macaque), this protein is C-X-C chemokine receptor type 4 (CXCR4).